The following is a 131-amino-acid chain: Profilin-2 (131 aa).

This sequence belongs to the profilin family. Occurs in many kinds of cells as a complex with monomeric actin in a 1:1 ratio. Expressed in vascular bundles of roots, hypocotyls, cotyledons, leaves, sepals, petals, stamen filaments and stalks of developing seeds. Expressed in leaf epidermal cells, trichomes and stem epidermal cells. Detected in phloem exudates (at protein level).

The protein localises to the cytoplasm. It is found in the cytoskeleton. The protein resides in the endoplasmic reticulum. It localises to the cytosol. Its subcellular location is the nucleus. Binds to actin monomers and regulates the organization of the actin cytoskeleton. At high concentrations, profilin prevents the polymerization of actin, whereas it enhances it at low concentrations. At low concentrations, associates with the poly-proline motif of formins to enhance actin filament elongation rate. Binds G-actin and poly-L-proline with low affinity in vitro. Binds ACT1, ACT7 and ACT11 and inhibits actin polymerization. May be involved in the cross-talk between vesicular trafficking and the actin cytoskeleton. Inhibits cell growth of various pathogenic fungal strains. May play a role as antifungal proteins in the defense system against fungal pathogen attacks. This is Profilin-2 from Arabidopsis thaliana (Mouse-ear cress).